The sequence spans 67 residues: uncharacterized protein (67 aa).

A helical membrane pass occupies residues 4-24 (WIFAILMLGVAIVLSIIATFF).

It localises to the membrane. This is an uncharacterized protein from Bacillus anthracis.